The following is a 156-amino-acid chain: Small ribosomal subunit protein uS7 (156 aa).

The protein belongs to the universal ribosomal protein uS7 family. In terms of assembly, part of the 30S ribosomal subunit. Contacts proteins S9 and S11.

Its function is as follows. One of the primary rRNA binding proteins, it binds directly to 16S rRNA where it nucleates assembly of the head domain of the 30S subunit. Is located at the subunit interface close to the decoding center, probably blocks exit of the E-site tRNA. This chain is Small ribosomal subunit protein uS7, found in Salmonella choleraesuis (strain SC-B67).